The chain runs to 389 residues: Inner membrane transport protein YdhP (389 aa).

Over methionine 1 to proline 6 the chain is Cytoplasmic. The helical transmembrane segment at leucine 7–leucine 27 threads the bilayer. The Periplasmic segment spans residues leucine 28 to glycine 43. The chain crosses the membrane as a helical span at residues methionine 44–leucine 64. Residues serine 65 to arginine 70 are Cytoplasmic-facing. A helical transmembrane segment spans residues serine 71–proline 91. The Periplasmic segment spans residues aspartate 92–arginine 100. A helical transmembrane segment spans residues isoleucine 101–valine 121. The Cytoplasmic segment spans residues valine 122–alanine 130. A helical membrane pass occupies residues valine 131 to tryptophan 151. Over leucine 152–arginine 159 the chain is Periplasmic. Residues methionine 160–leucine 180 form a helical membrane-spanning segment. The Cytoplasmic segment spans residues proline 181–valine 203. The chain crosses the membrane as a helical span at residues leucine 204–isoleucine 224. Over serine 225 to proline 236 the chain is Periplasmic. A helical transmembrane segment spans residues valine 237–glycine 257. Topologically, residues glycine 258–asparagine 266 are cytoplasmic. Residues glycine 267–alanine 287 form a helical membrane-spanning segment. Residues arginine 288–glutamate 290 are Periplasmic-facing. Residues phenylalanine 291–leucine 311 traverse the membrane as a helical segment. Over glutamine 312–asparagine 330 the chain is Cytoplasmic. Residues isoleucine 331 to alanine 351 traverse the membrane as a helical segment. Topologically, residues glycine 352 to serine 356 are periplasmic. Residues phenylalanine 357–alanine 377 form a helical membrane-spanning segment. Over arginine 378 to serine 389 the chain is Cytoplasmic.

The protein belongs to the major facilitator superfamily.

The protein localises to the cell inner membrane. In Escherichia coli (strain K12), this protein is Inner membrane transport protein YdhP (ydhP).